Consider the following 414-residue polypeptide: Serine/threonine transporter SstT (414 aa).

Residues 2 to 15 are Cytoplasmic-facing; that stretch reads TTQHSPGLFRRLAH. The chain crosses the membrane as a helical span at residues 16–36; sequence GSLVKQILAGLILGILLAWIS. Residues 37-45 are Periplasmic-facing; it reads KPAAEAVGL. Residues 46 to 66 traverse the membrane as a helical segment; it reads LGTLFVGALKAVAPILVLMLV. Over 67–83 the chain is Cytoplasmic; the sequence is MASIANHQHGQKTNIRP. A helical transmembrane segment spans residues 84 to 104; the sequence is ILFLYLLGTFSAALAAVIFSF. The Periplasmic portion of the chain corresponds to 105–142; it reads AFPSTLHLSSSAGDISPPSGIVEVMRGLVMSMVSNPID. The chain crosses the membrane as a helical span at residues 143-163; the sequence is ALLKGNYIGILVWAIGLGFAL. Residues 164-179 are Cytoplasmic-facing; it reads RHGNETTKNLVNDMSN. The chain crosses the membrane as a helical span at residues 180-200; sequence AVTFMVKLVIHFAPIGIFGLV. Residues 201–217 lie on the Periplasmic side of the membrane; that stretch reads SSTLATTGFSTLWGYAQ. Residues 218–238 form a helical membrane-spanning segment; sequence LLVVLVGCMLLVALVVNPLLV. At 239–299 the chain is on the cytoplasmic side; sequence WWKIRRNPFP…VSIPLGATIN (61 aa). A helical transmembrane segment spans residues 300 to 320; it reads MAGAAITITVLTLAAVNTLGI. The Periplasmic portion of the chain corresponds to 321 to 331; that stretch reads PVDLPTALLLS. Residues 332–352 traverse the membrane as a helical segment; the sequence is VVASLCACGASGVAGGSLLLI. Over 353–414 the chain is Cytoplasmic; the sequence is PLACNMFGIS…DRLANSALRN (62 aa).

The protein belongs to the dicarboxylate/amino acid:cation symporter (DAACS) (TC 2.A.23) family.

Its subcellular location is the cell inner membrane. It catalyses the reaction L-serine(in) + Na(+)(in) = L-serine(out) + Na(+)(out). It carries out the reaction L-threonine(in) + Na(+)(in) = L-threonine(out) + Na(+)(out). Its function is as follows. Involved in the import of serine and threonine into the cell, with the concomitant import of sodium (symport system). The sequence is that of Serine/threonine transporter SstT from Escherichia coli (strain UTI89 / UPEC).